The following is a 180-amino-acid chain: Centromere protein M (180 aa).

Component of the CENPA-NAC complex, at least composed of CENPA, CENPC, CENPH, CENPM, CENPN, CENPT and CENPU. The CENPA-NAC complex interacts with the CENPA-CAD complex, composed of CENPI, CENPK, CENPL, CENPO, CENPP, CENPQ, CENPR and CENPS.

Its subcellular location is the nucleus. It localises to the cytoplasm. The protein localises to the chromosome. It is found in the centromere. The protein resides in the kinetochore. Component of the CENPA-NAC (nucleosome-associated) complex, a complex that plays a central role in assembly of kinetochore proteins, mitotic progression and chromosome segregation. The CENPA-NAC complex recruits the CENPA-CAD (nucleosome distal) complex and may be involved in incorporation of newly synthesized CENPA into centromeres. The sequence is that of Centromere protein M (CENPM) from Bos taurus (Bovine).